Consider the following 298-residue polypeptide: Tyrosine recombinase XerC (298 aa).

Residues 1–84 (MNHIQEAFLN…TLRTFYEYWM (84 aa)) form the Core-binding (CB) domain. In terms of domain architecture, Tyr recombinase spans 105-286 (YLPQFFYEEE…SNQQLRKVYL (182 aa)). Active-site residues include R145, K169, H238, R241, and H264. Y273 serves as the catalytic O-(3'-phospho-DNA)-tyrosine intermediate.

The protein belongs to the 'phage' integrase family. XerC subfamily. In terms of assembly, forms a cyclic heterotetrameric complex composed of two molecules of XerC and two molecules of XerD.

The protein resides in the cytoplasm. In terms of biological role, site-specific tyrosine recombinase, which acts by catalyzing the cutting and rejoining of the recombining DNA molecules. The XerC-XerD complex is essential to convert dimers of the bacterial chromosome into monomers to permit their segregation at cell division. It also contributes to the segregational stability of plasmids. This Staphylococcus aureus (strain MSSA476) protein is Tyrosine recombinase XerC.